Consider the following 219-residue polypeptide: Large ribosomal subunit protein uL3 (219 aa).

Positions 133–153 (GRASHGNSRSHNVPGSIGMAQ) are disordered. Position 153 is an N5-methylglutamine (Gln153).

The protein belongs to the universal ribosomal protein uL3 family. As to quaternary structure, part of the 50S ribosomal subunit. Forms a cluster with proteins L14 and L19. In terms of processing, methylated by PrmB.

One of the primary rRNA binding proteins, it binds directly near the 3'-end of the 23S rRNA, where it nucleates assembly of the 50S subunit. This is Large ribosomal subunit protein uL3 from Burkholderia mallei (strain NCTC 10247).